Here is a 106-residue protein sequence, read N- to C-terminus: MDQFQHIDVQGAQALLEQSEAKLVDIRDPQSFAVAHAESAFHLTNDSIVSFMNDVEFEQPILVMCYHGISSQGAAQYLVNQGFEQVYSVDGGFEAWQRAELPIVRS.

The region spanning 17 to 105 (EQSEAKLVDI…WQRAELPIVR (89 aa)) is the Rhodanese domain. Cys65 (cysteine persulfide intermediate) is an active-site residue.

Belongs to the GlpE family.

Its subcellular location is the cytoplasm. The catalysed reaction is thiosulfate + hydrogen cyanide = thiocyanate + sulfite + 2 H(+). It carries out the reaction thiosulfate + [thioredoxin]-dithiol = [thioredoxin]-disulfide + hydrogen sulfide + sulfite + 2 H(+). Transferase that catalyzes the transfer of sulfur from thiosulfate to thiophilic acceptors such as cyanide or dithiols. May function in a CysM-independent thiosulfate assimilation pathway by catalyzing the conversion of thiosulfate to sulfite, which can then be used for L-cysteine biosynthesis. This chain is Thiosulfate sulfurtransferase GlpE, found in Vibrio campbellii (strain ATCC BAA-1116).